The chain runs to 117 residues: Large ribosomal subunit protein bL19 (117 aa).

It belongs to the bacterial ribosomal protein bL19 family.

This protein is located at the 30S-50S ribosomal subunit interface and may play a role in the structure and function of the aminoacyl-tRNA binding site. This chain is Large ribosomal subunit protein bL19, found in Shewanella piezotolerans (strain WP3 / JCM 13877).